A 154-amino-acid polypeptide reads, in one-letter code: Oleosin 16.4 kDa (154 aa).

Residue Ala2 is modified to N-acetylalanine. The segment at Ala2 to Thr33 is polar. Helical transmembrane passes span Val31–Thr51, Leu65–Ala85, and Gly86–Asn106. The hydrophobic stretch occupies residues Val34–Phe105.

This sequence belongs to the oleosin family.

It localises to the lipid droplet. The protein resides in the membrane. Its function is as follows. May have a structural role to stabilize the lipid body during desiccation of the seed by preventing coalescence of the oil. Probably interacts with both lipid and phospholipid moieties of lipid bodies. May also provide recognition signals for specific lipase anchorage in lipolysis during seedling growth. This Gossypium hirsutum (Upland cotton) protein is Oleosin 16.4 kDa (MATP7).